Reading from the N-terminus, the 249-residue chain is Aspartate/glutamate leucyltransferase (249 aa).

This sequence belongs to the R-transferase family. Bpt subfamily.

The protein resides in the cytoplasm. It catalyses the reaction N-terminal L-glutamyl-[protein] + L-leucyl-tRNA(Leu) = N-terminal L-leucyl-L-glutamyl-[protein] + tRNA(Leu) + H(+). It carries out the reaction N-terminal L-aspartyl-[protein] + L-leucyl-tRNA(Leu) = N-terminal L-leucyl-L-aspartyl-[protein] + tRNA(Leu) + H(+). In terms of biological role, functions in the N-end rule pathway of protein degradation where it conjugates Leu from its aminoacyl-tRNA to the N-termini of proteins containing an N-terminal aspartate or glutamate. The sequence is that of Aspartate/glutamate leucyltransferase from Brucella suis (strain ATCC 23445 / NCTC 10510).